The following is a 153-amino-acid chain: Mediator of RNA polymerase II transcription subunit 31 (153 aa).

2 disordered regions span residues 1–28 (MTLGAATANDPIDSTLASPSRDEQRRQA) and 125–153 (RDPENAAGQEQDEAGEQGEARETTGGQTA).

The protein belongs to the Mediator complex subunit 31 family. As to quaternary structure, component of the Mediator complex.

It localises to the nucleus. Functionally, component of the Mediator complex, a coactivator involved in the regulated transcription of nearly all RNA polymerase II-dependent genes. Mediator functions as a bridge to convey information from gene-specific regulatory proteins to the basal RNA polymerase II transcription machinery. Mediator is recruited to promoters by direct interactions with regulatory proteins and serves as a scaffold for the assembly of a functional preinitiation complex with RNA polymerase II and the general transcription factors. The polypeptide is Mediator of RNA polymerase II transcription subunit 31 (SOH1) (Mycosarcoma maydis (Corn smut fungus)).